Reading from the N-terminus, the 436-residue chain is UPF0597 protein DP0591 (436 aa).

It belongs to the UPF0597 family.

This is UPF0597 protein DP0591 from Desulfotalea psychrophila (strain LSv54 / DSM 12343).